A 183-amino-acid polypeptide reads, in one-letter code: UPF0114 protein HI_0507 (183 aa).

Helical transmembrane passes span 30–50 (LQVP…YKFI), 68–88 (IMLG…LVMV), and 150–170 (TMMW…ALAY).

The protein belongs to the UPF0114 family.

The protein localises to the cell membrane. The polypeptide is UPF0114 protein HI_0507 (Haemophilus influenzae (strain ATCC 51907 / DSM 11121 / KW20 / Rd)).